The sequence spans 180 residues: Ribosome maturation factor RimM (180 aa).

The region spanning 104-177 is the PRC barrel domain; sequence PEEFHDHQLV…RVVVDPPGGL (74 aa).

Belongs to the RimM family. As to quaternary structure, binds ribosomal protein uS19.

The protein localises to the cytoplasm. Its function is as follows. An accessory protein needed during the final step in the assembly of 30S ribosomal subunit, possibly for assembly of the head region. Essential for efficient processing of 16S rRNA. May be needed both before and after RbfA during the maturation of 16S rRNA. It has affinity for free ribosomal 30S subunits but not for 70S ribosomes. This chain is Ribosome maturation factor RimM, found in Salinispora tropica (strain ATCC BAA-916 / DSM 44818 / JCM 13857 / NBRC 105044 / CNB-440).